A 403-amino-acid chain; its full sequence is MEPGPGGRGAARGQRPPNAAQPREQERKLEQEKLSGVVKSVHRRLRKKYREVGDFDKIWREHCEDAETLCEYAVAMKNLADNHWAKTCEGEGRIEWCCSVCREYFQNGGKRKALEKDEKRAVLATKTTPALNVHESSKLEGPLTNLSFTSPDFITELLQASGKIRLLDVGSCFNPFLKFEEFLTVGIDIVPAVESVYKCDFLNLQLQQPLQLAQDAIDAFLKQLRNPIDALPGELFHVVVFSLLLSYFPSPYQRWICCKKAHELLVLNGLLLIITPDSSHQNRHAMMMKSWKIAIESLGFKRFKYSKFSHMHLMAFRKTSLKTTSDLVSRNYPGMLYIPQDFNSVEEEEYSNTSCYVRSDLEDEQLAYGFTELPEAPYDSDSGESQASSIPFYELEDPILLLS.

Over residues Met-1–Ala-10 the composition is skewed to gly residues. Residues Met-1–Glu-32 form a disordered region. Positions Ala-11–Pro-22 are enriched in low complexity. Residues Arg-23 to Glu-32 are compositionally biased toward basic and acidic residues. Residues Arg-93, Gly-170, Asp-188, Asp-200, Phe-201, and Ser-242 each contribute to the S-adenosyl-L-methionine site.

This sequence belongs to the BMT2/SAMTOR family. As to quaternary structure, interacts with the GATOR1 complex; interaction is disrupted when SAMTOR binds S-adenosyl-L-methionine. Interacts with the KICSTOR complex; interaction is disrupted when SAMTOR binds S-adenosyl-L-methionine.

Its function is as follows. S-adenosyl-L-methionine-binding protein that acts as an inhibitor of mTORC1 signaling via interaction with the GATOR1 and KICSTOR complexes. Acts as a sensor of S-adenosyl-L-methionine to signal methionine sufficiency to mTORC1: in presence of methionine, binds S-adenosyl-L-methionine, leading to disrupt interaction with the GATOR1 and KICSTOR complexes and promote mTORC1 signaling. Upon methionine starvation, S-adenosyl-L-methionine levels are reduced, thereby promoting the association with GATOR1 and KICSTOR, leading to inhibit mTORC1 signaling. Probably also acts as a S-adenosyl-L-methionine-dependent methyltransferase. The sequence is that of S-adenosylmethionine sensor upstream of mTORC1 from Mus musculus (Mouse).